Consider the following 312-residue polypeptide: Coiled-coil domain-containing protein 42 homolog (312 aa).

2 coiled-coil regions span residues 34–121 and 172–233; these read RLLE…RLKE and ATHQ…WESQ.

Belongs to the CFAP73 family.

This chain is Coiled-coil domain-containing protein 42 homolog, found in Nematostella vectensis (Starlet sea anemone).